The chain runs to 550 residues: Hydroxylamine reductase (550 aa).

Residues cysteine 3, cysteine 6, cysteine 18, and cysteine 25 each coordinate [2Fe-2S] cluster. Hybrid [4Fe-2O-2S] cluster is bound by residues histidine 249, glutamate 273, cysteine 317, cysteine 405, cysteine 433, cysteine 458, glutamate 492, and lysine 494. Residue cysteine 405 is modified to Cysteine persulfide.

The protein belongs to the HCP family. [2Fe-2S] cluster is required as a cofactor. Requires hybrid [4Fe-2O-2S] cluster as cofactor.

It localises to the cytoplasm. It catalyses the reaction A + NH4(+) + H2O = hydroxylamine + AH2 + H(+). Its function is as follows. Catalyzes the reduction of hydroxylamine to form NH(3) and H(2)O. The protein is Hydroxylamine reductase of Salmonella enteritidis PT4 (strain P125109).